The chain runs to 122 residues: Large ribosomal subunit protein uL14 (122 aa).

Belongs to the universal ribosomal protein uL14 family. As to quaternary structure, part of the 50S ribosomal subunit. Forms a cluster with proteins L3 and L19. In the 70S ribosome, L14 and L19 interact and together make contacts with the 16S rRNA in bridges B5 and B8.

Its function is as follows. Binds to 23S rRNA. Forms part of two intersubunit bridges in the 70S ribosome. This is Large ribosomal subunit protein uL14 from Mycobacterium marinum (strain ATCC BAA-535 / M).